We begin with the raw amino-acid sequence, 246 residues long: Triosephosphate isomerase (246 aa).

9 to 11 provides a ligand contact to substrate; sequence NWK. The active-site Electrophile is His99. The Proton acceptor role is filled by Glu168. Substrate contacts are provided by residues Gly174, Ser207, and 228–229; that span reads GG.

The protein belongs to the triosephosphate isomerase family. As to quaternary structure, homodimer.

The protein localises to the cytoplasm. The enzyme catalyses D-glyceraldehyde 3-phosphate = dihydroxyacetone phosphate. It functions in the pathway carbohydrate biosynthesis; gluconeogenesis. Its pathway is carbohydrate degradation; glycolysis; D-glyceraldehyde 3-phosphate from glycerone phosphate: step 1/1. In terms of biological role, involved in the gluconeogenesis. Catalyzes stereospecifically the conversion of dihydroxyacetone phosphate (DHAP) to D-glyceraldehyde-3-phosphate (G3P). The polypeptide is Triosephosphate isomerase (Prochlorococcus marinus (strain NATL1A)).